Reading from the N-terminus, the 303-residue chain is N-acetyl-D-glucosamine kinase (303 aa).

Residues 4–11 and 133–140 each bind ATP; these read GFDIGGTK and GVGGGLIF. Residues His157, Cys177, Cys179, and Cys184 each coordinate Zn(2+).

The protein belongs to the ROK (NagC/XylR) family. NagK subfamily.

It catalyses the reaction N-acetyl-D-glucosamine + ATP = N-acetyl-D-glucosamine 6-phosphate + ADP + H(+). The protein operates within cell wall biogenesis; peptidoglycan recycling. In terms of biological role, catalyzes the phosphorylation of N-acetyl-D-glucosamine (GlcNAc) derived from cell-wall degradation, yielding GlcNAc-6-P. This chain is N-acetyl-D-glucosamine kinase, found in Shigella boydii serotype 4 (strain Sb227).